A 74-amino-acid chain; its full sequence is Ribosome modulation factor (74 aa).

This sequence belongs to the ribosome modulation factor family.

The protein resides in the cytoplasm. Functionally, during stationary phase, converts 70S ribosomes to an inactive dimeric form (100S ribosomes). The polypeptide is Ribosome modulation factor (Cellvibrio japonicus (strain Ueda107) (Pseudomonas fluorescens subsp. cellulosa)).